The chain runs to 225 residues: Paired immunoglobulin-like type 2 receptor beta-2 (225 aa).

A signal peptide spans 1–31 (MALLISLPGETPAMAQILLLLSSACLHAGNS). The Extracellular portion of the chain corresponds to 32–195 (ARSNGGNDFG…NPSLMNLGAM (164 aa)). N-linked (GlcNAc...) asparagine glycosylation is found at asparagine 90, asparagine 107, and asparagine 160. The helical transmembrane segment at 196–216 (VTMLLAKVVVIILVYGWMIFL) threads the bilayer. Over 217–225 (RWKQRPDPA) the chain is Cytoplasmic.

It is found in the membrane. Its function is as follows. Paired receptors consist of highly related activating and inhibitory receptors and are widely involved in the regulation of the immune system. PILRB2 is probably a cellular signaling activating receptor that associates with ITAM-bearing adapter molecules on the cell surface. The polypeptide is Paired immunoglobulin-like type 2 receptor beta-2 (Pilrb2) (Mus musculus (Mouse)).